The sequence spans 469 residues: Glutamate--tRNA ligase (469 aa).

The 'HIGH' region signature appears at 9 to 19; sequence PSPTGFLHVGG. 4 residues coordinate Zn(2+): Cys-98, Cys-100, Cys-125, and Asp-127. A 'KMSKS' region motif is present at residues 236-240; it reads KLSKR. Lys-239 serves as a coordination point for ATP.

The protein belongs to the class-I aminoacyl-tRNA synthetase family. Glutamate--tRNA ligase type 1 subfamily. As to quaternary structure, monomer. Zn(2+) is required as a cofactor.

Its subcellular location is the cytoplasm. It catalyses the reaction tRNA(Glu) + L-glutamate + ATP = L-glutamyl-tRNA(Glu) + AMP + diphosphate. Catalyzes the attachment of glutamate to tRNA(Glu) in a two-step reaction: glutamate is first activated by ATP to form Glu-AMP and then transferred to the acceptor end of tRNA(Glu). The chain is Glutamate--tRNA ligase from Shewanella sp. (strain ANA-3).